Consider the following 1006-residue polypeptide: Cytosolic carboxypeptidase 3 (1006 aa).

A Peptidase M14 domain is found at 304 to 576 (YPYTYSNLQE…HFCDSLLDYC (273 aa)). Zn(2+)-binding residues include His368, Glu371, and His464. The active-site Proton donor/acceptor is the Glu540. The disordered stretch occupies residues 790-810 (ESHHQLKSKAKRCSSFQSKRT).

The protein belongs to the peptidase M14 family. Requires Zn(2+) as cofactor. In terms of tissue distribution, widely expressed. Expressed abundantly in tissues with m otile cilia such as testis, lung and trachea. Abundantly expressed in pituitary and kidney, moderately expressed in brain, eye, fat, pancreas, stomach, and adrenal.

It is found in the cytoplasm. The protein localises to the cytosol. It carries out the reaction (L-glutamyl)(n+1)-gamma-L-glutamyl-L-glutamyl-[protein] + H2O = (L-glutamyl)(n)-gamma-L-glutamyl-L-glutamyl-[protein] + L-glutamate. Functionally, metallocarboxypeptidase that mediates deglutamylation of tubulin and non-tubulin target proteins. Catalyzes the removal of polyglutamate side chains present on the gamma-carboxyl group of glutamate residues within the C-terminal tail of tubulin protein. Specifically cleaves tubulin long-side-chains, while it is not able to remove the branching point glutamate. Also catalyzes the removal of polyglutamate residues from the carboxy-terminus of non-tubulin proteins such as MYLK. May catalyze the hydrolysis of aspartate from the carboxy-terminus of target proteins. Does not show detyrosinase or deglycylase activities from the carboxy-terminus of target proteins. This is Cytosolic carboxypeptidase 3 from Mus musculus (Mouse).